A 325-amino-acid chain; its full sequence is MTNQSLPKLTYTGASKSAVPIISESELQTVTAEPWLKISDEGLQLEGLVFDRDHNLFLCEVFGGKIFKVDIDTKKVSTAFQSTKQNPAAVKIHKDGRLFTCYLGDFESTGGIFATDEHGEQFEEIISELNTEYCIDDMVFDSKGGFYFTDFRGYSTNPKGGVYYVSPDFKTVTPVIQNISVANGVALSTDEKILWVTETTTNRLHRIQLEDDGVTIAPFGATIPYYFTGHEGPDSVCIDSDDNLYVAMYGQGRVLVFNKRGYPIGQILMPGRDEGKMLRSTHPQFIPGTNQLLICTNDIENDSEGGSMIYTVEAFAKGHESYQFQ.

Ca(2+)-binding residues include Glu-46, Ser-108, Gly-110, Glu-128, Thr-131, Tyr-133, Asp-136, Asn-183, Asp-234, and Ser-235. Catalysis depends on Asp-234, which acts as the Proton donor.

The protein belongs to the SMP-30/CGR1 family. Ca(2+) serves as cofactor.

It localises to the cytoplasm. In terms of biological role, exhibits lactonase activity. Acts in cells with perturbed membrane integrity and is possibly related to the membrane homeostasis. The sequence is that of Lactonase drp35 (drp35) from Staphylococcus haemolyticus (strain JCSC1435).